The following is a 434-amino-acid chain: Tryptophan synthase beta chain (434 aa).

An N6-(pyridoxal phosphate)lysine modification is found at Lys92. The interval 411–434 (VKGGVATSPESFDASGAKGAGSQS) is disordered.

This sequence belongs to the TrpB family. In terms of assembly, tetramer of two alpha and two beta chains. Requires pyridoxal 5'-phosphate as cofactor.

The enzyme catalyses (1S,2R)-1-C-(indol-3-yl)glycerol 3-phosphate + L-serine = D-glyceraldehyde 3-phosphate + L-tryptophan + H2O. Its pathway is amino-acid biosynthesis; L-tryptophan biosynthesis; L-tryptophan from chorismate: step 5/5. Its function is as follows. The beta subunit is responsible for the synthesis of L-tryptophan from indole and L-serine. The protein is Tryptophan synthase beta chain of Polaromonas naphthalenivorans (strain CJ2).